The primary structure comprises 215 residues: Enolase-phosphatase E1 (215 aa).

Mg(2+) is bound by residues aspartate 11 and glutamate 13. Residues 117–118 (SS) and lysine 151 contribute to the substrate site. Aspartate 174 contacts Mg(2+).

Belongs to the HAD-like hydrolase superfamily. MasA/MtnC family. As to quaternary structure, monomer. Requires Mg(2+) as cofactor.

The protein resides in the cytoplasm. It is found in the nucleus. The catalysed reaction is 5-methylsulfanyl-2,3-dioxopentyl phosphate + H2O = 1,2-dihydroxy-5-(methylsulfanyl)pent-1-en-3-one + phosphate. It participates in amino-acid biosynthesis; L-methionine biosynthesis via salvage pathway; L-methionine from S-methyl-5-thio-alpha-D-ribose 1-phosphate: step 3/6. Its pathway is amino-acid biosynthesis; L-methionine biosynthesis via salvage pathway; L-methionine from S-methyl-5-thio-alpha-D-ribose 1-phosphate: step 4/6. Its function is as follows. Bifunctional enzyme that catalyzes the enolization of 2,3-diketo-5-methylthiopentyl-1-phosphate (DK-MTP-1-P) into the intermediate 2-hydroxy-3-keto-5-methylthiopentenyl-1-phosphate (HK-MTPenyl-1-P), which is then dephosphorylated to form the acireductone 1,2-dihydroxy-3-keto-5-methylthiopentene (DHK-MTPene). This Schizosaccharomyces japonicus (strain yFS275 / FY16936) (Fission yeast) protein is Enolase-phosphatase E1 (utr4).